Reading from the N-terminus, the 140-residue chain is MDSRIPYDDYPVVFLPAYENPPAWIPPHERVHHPDYNNELTQFLPRTITLKKPPGAQLGFNIRGGKASQLGIFISKVIPDSDAHRAGLQEGDQVLAVNDVDFQDIEHSKAVEILKTAREISMRVRFFPYNYHRQKERTVH.

The PDZ domain occupies T47 to Y129.

Interacts with ATP2B1, ATP2B2, ATP2B3, ATP2B4 and ATP7A. Interacts with PLEKHA7 (via WW domains) at zonula adherens; this interaction is essential for the interaction between PLEKHA7 and the ADAM10-binding protein TSPAN33. Interacts with SLC5A6. Widely expressed (at protein level).

Its subcellular location is the secreted. The protein localises to the cytoplasm. The protein resides in the cell junction. It is found in the adherens junction. It localises to the cell membrane. Mediates docking of ADAM10 to zonula adherens by interacting with PLEKHA7 which is required for PLEKHA7 to interact with the ADAM10-binding protein TSPAN33. This chain is PDZ domain-containing protein 11 (PDZD11), found in Homo sapiens (Human).